The sequence spans 485 residues: Probable alginate O-acetylase AlgI (485 aa).

The next 9 membrane-spanning stretches (helical) occupy residues 7–24 (VFLF…YLSG), 39–61 (FYAW…NYWI), 78–100 (WLLL…NFGV), 115–137 (FILT…ISYI), 150–172 (NLID…VLRF), 312–334 (FLTM…WGAW), 360–382 (AFTF…HVAA), 402–424 (AQLT…FFGL), and 461–483 (ILLL…FLYF). Residue histidine 322 is part of the active site.

Belongs to the membrane-bound acyltransferase family.

It is found in the cell inner membrane. It functions in the pathway glycan biosynthesis; alginate biosynthesis. Functionally, together with AlgJ and AlgF, forms an inner membrane complex which probably interacts with the alginate polymerization-transport complex and adds acetyl groups at the O-2 and O-3 positions of mannuronate residues. Acetylation of alginate is important for the architecture of biofilms and increases the ability of alginate to act as a defense barrier. This is Probable alginate O-acetylase AlgI (algI) from Pseudomonas putida (strain ATCC 47054 / DSM 6125 / CFBP 8728 / NCIMB 11950 / KT2440).